The primary structure comprises 154 residues: Large ribosomal subunit protein uL13 (154 aa).

Belongs to the universal ribosomal protein uL13 family. As to quaternary structure, part of the 50S ribosomal subunit.

In terms of biological role, this protein is one of the early assembly proteins of the 50S ribosomal subunit, although it is not seen to bind rRNA by itself. It is important during the early stages of 50S assembly. This Rhizobium meliloti (strain 1021) (Ensifer meliloti) protein is Large ribosomal subunit protein uL13.